Reading from the N-terminus, the 73-residue chain is uncharacterized protein (73 aa).

2 consecutive transmembrane segments (helical) span residues 4-24 (LIPVALLTALLAGCAHDSPCV) and 51-71 (AGAIAGGAAAVAGLTMGIIAL).

It is found in the cell membrane. This is an uncharacterized protein from Escherichia coli O157:H7.